Consider the following 164-residue polypeptide: CB1 cannabinoid receptor-interacting protein 1 (164 aa).

Belongs to the CNRIP family. As to quaternary structure, interacts with the cannabinoid receptor CNR1 (via C-terminus). Does not interact with cannabinoid receptor CNR2.

Functionally, suppresses cannabinoid receptor CNR1-mediated tonic inhibition of voltage-gated calcium channels. The polypeptide is CB1 cannabinoid receptor-interacting protein 1 (CNRIP1) (Bos taurus (Bovine)).